The chain runs to 386 residues: Cystathionine gamma-synthase (386 aa).

Lys198 bears the N6-(pyridoxal phosphate)lysine mark.

Belongs to the trans-sulfuration enzymes family. Homotetramer. The cofactor is pyridoxal 5'-phosphate.

Its subcellular location is the cytoplasm. It carries out the reaction O-succinyl-L-homoserine + L-cysteine = L,L-cystathionine + succinate + H(+). It participates in amino-acid biosynthesis; L-methionine biosynthesis via de novo pathway; L-cystathionine from O-succinyl-L-homoserine: step 1/1. Catalyzes the formation of L-cystathionine from O-succinyl-L-homoserine (OSHS) and L-cysteine, via a gamma-replacement reaction. In the absence of thiol, catalyzes gamma-elimination to form 2-oxobutanoate, succinate and ammonia. The chain is Cystathionine gamma-synthase (metB) from Escherichia coli (strain K12).